The following is a 520-amino-acid chain: Transactivator/viroplasmin protein (520 aa).

2 disordered regions span residues 32-51 (GSSQ…KEEA) and 487-520 (QDAS…KQVD). The segment covering 40 to 51 (SLHRETPEKEEA) has biased composition (basic and acidic residues).

The protein belongs to the caulimoviridae viroplasmin family.

The protein localises to the host cytoplasm. Its function is as follows. Enhances the ribosomal termination-reinitiation event leading to the translation of major open reading frames on the polycistronic viral RNAs. The protein is Transactivator/viroplasmin protein of Arabidopsis thaliana (Mouse-ear cress).